Reading from the N-terminus, the 311-residue chain is Olfactory receptor 14I1 (311 aa).

Residues 1 to 26 (MDNLTKVTEFLLMEFSGIWELQVLHA) lie on the Extracellular side of the membrane. Asparagine 3 is a glycosylation site (N-linked (GlcNAc...) asparagine). A helical membrane pass occupies residues 27–47 (GLFLLIYLAVLVGNLLIIAVI). At 48–55 (TLDQHLHT) the chain is on the cytoplasmic side. Residues 56–76 (PMYFFLKNLSVLDLCYISVTV) form a helical membrane-spanning segment. Topologically, residues 77-92 (PKSIRNSLTRRSSISY) are extracellular. The helical transmembrane segment at 93 to 113 (LGCVAQVYFFSAFASAELAFL) threads the bilayer. Cysteine 95 and cysteine 188 are joined by a disulfide. The Cytoplasmic segment spans residues 114 to 141 (TVMSYDRYVAICHPLQYRAVMTSGGCYQ). The helical transmembrane segment at 142–162 (MAVTTWLSCFSYAAVHTGNMF) threads the bilayer. At 163–189 (REHVCRSSVIHQFFRDIPHVLALVSCE) the chain is on the extracellular side. The chain crosses the membrane as a helical span at residues 190–210 (VFFVEFLTLALSSCLVLGCFI). At 211 to 241 (LMMISYFQIFSTVLRIPSGQSRAKAFSTCSP) the chain is on the cytoplasmic side. A helical transmembrane segment spans residues 242–262 (QLIVIMLFLTTGLFAALGPIA). At 263–269 (KALSIQD) the chain is on the extracellular side. Residues 270–290 (LVIALTYTVLPPFLNPIIYSL) form a helical membrane-spanning segment. Residues 291 to 311 (RNKEIKTAMWRLFVKIYFLQK) are Cytoplasmic-facing.

Belongs to the G-protein coupled receptor 1 family.

It localises to the cell membrane. Its function is as follows. Odorant receptor. This is Olfactory receptor 14I1 (OR14I1) from Homo sapiens (Human).